A 131-amino-acid chain; its full sequence is Small ribosomal subunit protein uS8 (131 aa).

The protein belongs to the universal ribosomal protein uS8 family. As to quaternary structure, part of the 30S ribosomal subunit. Contacts proteins S5 and S12.

Functionally, one of the primary rRNA binding proteins, it binds directly to 16S rRNA central domain where it helps coordinate assembly of the platform of the 30S subunit. The polypeptide is Small ribosomal subunit protein uS8 (Acinetobacter baumannii (strain AB307-0294)).